The chain runs to 87 residues: uncharacterized protein (87 aa).

2 consecutive transmembrane segments (helical) span residues 25-45 (LVAAVIAVTMALWLGVQWLGG) and 53-73 (YAFLADLAAIGALIWSLLVTF).

It localises to the cell membrane. This is an uncharacterized protein from Paracoccus denitrificans.